Consider the following 1459-residue polypeptide: PPE family protein PPE34 (1459 aa).

It belongs to the mycobacterial PPE family. As to quaternary structure, interacts with human TLR2.

The protein resides in the cell membrane. The protein localises to the secreted. It is found in the cell wall. It localises to the cell surface. Facilitates a shift in the ensuing immunity toward the Th2 phenotype and could aid in immune evasion by mycobacteria. Interacts with human Toll-like receptor 2 (TLR2) and triggers functional maturation of human dendritic cells (DCs), leading to secretion of IL-4, IL-5 and IL-10 from CD4(+) T cells and induction of Th2 immune response. Maturation of DCs involves PI3K, ERK1/2, p38 MAPK and NF-kappa-B signaling pathways. The sequence is that of PPE family protein PPE34 from Mycobacterium tuberculosis (strain ATCC 25618 / H37Rv).